Here is a 257-residue protein sequence, read N- to C-terminus: Large ribosomal subunit protein uL2 (257 aa).

Positions 207 to 226 are disordered; sequence VEHPFGGGNHQHIGKPSTIR.

Belongs to the universal ribosomal protein uL2 family. Component of the large ribosomal subunit.

The protein resides in the cytoplasm. Component of the large ribosomal subunit. The ribosome is a large ribonucleoprotein complex responsible for the synthesis of proteins in the cell. The chain is Large ribosomal subunit protein uL2 (rpl8) from Ictalurus punctatus (Channel catfish).